Consider the following 315-residue polypeptide: 2,3-dihydroxyphenylpropionate/2,3-dihydroxicinnamic acid 1,2-dioxygenase (315 aa).

The active-site Proton donor is histidine 118. Histidine 182 acts as the Proton acceptor in catalysis.

Belongs to the LigB/MhpB extradiol dioxygenase family. In terms of assembly, homotetramer. Fe(2+) serves as cofactor.

The enzyme catalyses 3-(2,3-dihydroxyphenyl)propanoate + O2 = (2Z,4E)-2-hydroxy-6-oxonona-2,4-dienedioate + H(+). It carries out the reaction (2E)-3-(2,3-dihydroxyphenyl)prop-2-enoate + O2 = (2Z,4E,7E)-2-hydroxy-6-oxonona-2,4,7-trienedioate + H(+). It participates in aromatic compound metabolism; 3-phenylpropanoate degradation. In terms of biological role, catalyzes the non-heme iron(II)-dependent oxidative cleavage of 2,3-dihydroxyphenylpropionic acid and 2,3-dihydroxicinnamic acid into 2-hydroxy-6-ketononadienedioate and 2-hydroxy-6-ketononatrienedioate, respectively. The sequence is that of 2,3-dihydroxyphenylpropionate/2,3-dihydroxicinnamic acid 1,2-dioxygenase from Mycolicibacterium gilvum (strain PYR-GCK) (Mycobacterium gilvum (strain PYR-GCK)).